Here is a 416-residue protein sequence, read N- to C-terminus: 3-oxoacyl-[acyl-carrier-protein] synthase 1 (416 aa).

The 405-residue stretch at 11–415 (FPSVVVTAVT…GHNVALAFGR (405 aa)) folds into the Ketosynthase family 3 (KS3) domain. Catalysis depends on for beta-ketoacyl synthase activity residues Cys-171, His-311, and His-345. Positions 311 and 345 each coordinate substrate.

It belongs to the thiolase-like superfamily. Beta-ketoacyl-ACP synthases family.

The protein localises to the cytoplasm. The enzyme catalyses an ultra-long-chain mono-unsaturated fatty acyl-[ACP] + malonyl-[ACP] + H(+) = a 3-oxo-ultra-long-chain mono-unsaturated fatty acyl-[ACP] + holo-[ACP] + CO2. It functions in the pathway lipid metabolism; mycolic acid biosynthesis. Its function is as follows. Part of the mycobacterial fatty acid elongation system FAS-II, which is involved in mycolic acid biosynthesis. Catalyzes the elongation of long chain acyl-ACP substrates by the addition of two carbons from malonyl-ACP to an acyl acceptor. Involved in the initial extension of the mycolate chain and forms monounsaturated fatty acids that averaged 40 carbons in length. The chain is 3-oxoacyl-[acyl-carrier-protein] synthase 1 (kasA) from Mycobacterium tuberculosis (strain ATCC 35801 / TMC 107 / Erdman).